The chain runs to 496 residues: Palmitoleoyl-protein carboxylesterase NOTUM (496 aa).

The signal sequence occupies residues M1–G19. The tract at residues E21 to G46 is disordered. Phosphoserine; by FAM20C is present on S81. N-linked (GlcNAc...) asparagine glycosylation occurs at N96. Catalysis depends on charge relay system residues S232, D340, and H389.

Belongs to the pectinacetylesterase family. Notum subfamily. Rarely expressed in adult normal tissues.

Its subcellular location is the secreted. The catalysed reaction is [Wnt protein]-O-(9Z)-hexadecenoyl-L-serine + H2O = [Wnt protein]-L-serine + (9Z)-hexadecenoate + H(+). Its function is as follows. Carboxylesterase that acts as a key negative regulator of the Wnt signaling pathway by specifically mediating depalmitoleoylation of WNT proteins. Serine palmitoleoylation of WNT proteins is required for efficient binding to frizzled receptors. In Homo sapiens (Human), this protein is Palmitoleoyl-protein carboxylesterase NOTUM.